We begin with the raw amino-acid sequence, 485 residues long: Serine/threonine-protein kinase 4 (485 aa).

The region spanning 30–281 is the Protein kinase domain; it reads FDVLEKLGEG…ATELLQHPFI (252 aa). Residues 36–44 and Lys59 each bind ATP; that span reads LGEGSYGSV. The active-site Proton acceptor is the Asp149. Position 183 is a phosphothreonine; by autocatalysis (Thr183). The 48-residue stretch at 431–478 folds into the SARAH domain; sequence YSFLKDWSVAEVQLKLNSLDPMMEREIEEIHHKYQAKRQPILEAIESK.

The protein belongs to the protein kinase superfamily. STE Ser/Thr protein kinase family. STE20 subfamily. Homodimer; mediated via the coiled-coil region. The cofactor is Mg(2+). In terms of processing, autophosphorylated on Thr-183. Proteolytically cleaved by caspase-3 during apoptosis at Asp-326 resulting in a 37 kDa form. Proteolytic cleavage results in kinase activation and nuclear translocation of the truncated form (MST1/N).

It is found in the cytoplasm. The protein localises to the nucleus. It catalyses the reaction L-seryl-[protein] + ATP = O-phospho-L-seryl-[protein] + ADP + H(+). It carries out the reaction L-threonyl-[protein] + ATP = O-phospho-L-threonyl-[protein] + ADP + H(+). Its activity is regulated as follows. The C-terminal non-catalytic region inhibits the kinase activity, the enzyme is activated by caspase-cleavage. Homodimerization and autophosphorylation of Thr-183 is also required for full activation. In terms of biological role, stress-activated, pro-apoptotic kinase which, following caspase-cleavage, enters the nucleus and induces chromatin condensation followed by internucleosomal DNA fragmentation. Key component of the Hippo signaling pathway which plays a pivotal role in organ size control and tumor suppression by restricting proliferation and promoting apoptosis. The core of this pathway is composed of a kinase cascade wherein stk3/mst2 and stk4/mst1, in complex with its regulatory protein sav1, phosphorylates and activates lats1/2 in complex with its regulatory protein mob1, which in turn phosphorylates and inactivates yap1 oncoprotein and wwtr1/taz. Phosphorylation of yap1 by lats2 inhibits its translocation into the nucleus to regulate cellular genes important for cell proliferation, cell death, and cell migration. Phosphorylates 'Ser-14' of histone H2B (H2BS14ph) during apoptosis. In Xenopus laevis (African clawed frog), this protein is Serine/threonine-protein kinase 4 (stk4).